The following is a 141-amino-acid chain: Small ribosomal subunit protein bS6 (141 aa).

The interval 97 to 141 (TGQSEMLKAEENRSERRERRDRPEHSDSADGDDGDNSDVSDNADE) is disordered. Basic and acidic residues predominate over residues 103 to 124 (LKAEENRSERRERRDRPEHSDS). Over residues 125–141 (ADGDDGDNSDVSDNADE) the composition is skewed to acidic residues.

It belongs to the bacterial ribosomal protein bS6 family.

Functionally, binds together with bS18 to 16S ribosomal RNA. In Pseudomonas syringae pv. syringae (strain B728a), this protein is Small ribosomal subunit protein bS6.